Consider the following 369-residue polypeptide: Iron-sulfur cluster assembly SufBD family protein AF_2365 (369 aa).

It belongs to the iron-sulfur cluster assembly SufBD family.

This chain is Iron-sulfur cluster assembly SufBD family protein AF_2365, found in Archaeoglobus fulgidus (strain ATCC 49558 / DSM 4304 / JCM 9628 / NBRC 100126 / VC-16).